The chain runs to 275 residues: Dermonecrotic toxin LamSicTox-alphaIV1i (275 aa).

Residue H5 is part of the active site. Residues E25 and D27 each contribute to the Mg(2+) site. Catalysis depends on H41, which acts as the Nucleophile. 2 disulfides stabilise this stretch: C45/C51 and C47/C192. D85 is a binding site for Mg(2+).

This sequence belongs to the arthropod phospholipase D family. Class II subfamily. Requires Mg(2+) as cofactor. As to expression, expressed by the venom gland.

It localises to the secreted. It carries out the reaction an N-(acyl)-sphingosylphosphocholine = an N-(acyl)-sphingosyl-1,3-cyclic phosphate + choline. The enzyme catalyses an N-(acyl)-sphingosylphosphoethanolamine = an N-(acyl)-sphingosyl-1,3-cyclic phosphate + ethanolamine. The catalysed reaction is a 1-acyl-sn-glycero-3-phosphocholine = a 1-acyl-sn-glycero-2,3-cyclic phosphate + choline. It catalyses the reaction a 1-acyl-sn-glycero-3-phosphoethanolamine = a 1-acyl-sn-glycero-2,3-cyclic phosphate + ethanolamine. Dermonecrotic toxins cleave the phosphodiester linkage between the phosphate and headgroup of certain phospholipids (sphingolipid and lysolipid substrates), forming an alcohol (often choline) and a cyclic phosphate. This toxin acts on sphingomyelin (SM). It may also act on ceramide phosphoethanolamine (CPE), lysophosphatidylcholine (LPC) and lysophosphatidylethanolamine (LPE), but not on lysophosphatidylserine (LPS), and lysophosphatidylglycerol (LPG). It acts by transphosphatidylation, releasing exclusively cyclic phosphate products as second products. Induces dermonecrosis, hemolysis, increased vascular permeability, edema, inflammatory response, and platelet aggregation. The sequence is that of Dermonecrotic toxin LamSicTox-alphaIV1i from Loxosceles amazonica (Recluse spider).